Here is a 697-residue protein sequence, read N- to C-terminus: MDMEEKPKYGEPRKFDPSFKGPIQNRGCTDIVCCIIFIIAILGYLAVGILAWTHGDPRKVIYPTDSMGQFCGQGKLEKQPFLFYFNMMKCASPMVLLEFQCPTPQVCVQTCPNRTMTLITAISKPQDWEYYKSYCKEDPGHKAAAQILKEKLCPAYLVSSNPFLQRCFPSMGKKGEVITVGDQEKFSDGVNVLDAKDLMAGMKNASIVMEGRQVAMKIFEDYTKSWYWILICLLIAVVLSLIFIVLLRFLAGVMVWVMILMVVAVIAYGIAHCSIKYVSLKDTPGSNITLQQLGFQPDFAVYLHIRQTWLAFIIILAILELIIILLLIFLRNRIRVAVELMKEASRAIGYVMSSLVFPIFTFFLLAIVIAFWGVNAVFLSTSSEPVYKVFNETECVHSRETCNPENFTSSSMKSDCPHSQCLFAFYGGETPYHKYLILLQFYNVFLFFWCANFVTALGQMTLAGAFASYYWAFDKSKDMPAFPLCASLGRSLRYHTGSLAFGSLLLAIVQVIRVLLEYIDHKLKGAENKFAKFLLCCLKCCFWCLEKFIKFINRNAYIMVAIYGKNFCRSARDAFFLLMRNVVRVVVLDKVTDFILFLGKLLIVGLVGIFAFFFFSGQTDAFKGTAPSLHYYWVPILTVLVCSYLIAHGFFSVYAMCVDTLFLCFLEDLERNDGSAERPYLMSENLLNVLKKKNQAN.

Residues 1 to 30 (MDMEEKPKYGEPRKFDPSFKGPIQNRGCTD) lie on the Cytoplasmic side of the membrane. Residues 31–51 (IVCCIIFIIAILGYLAVGILA) form a helical membrane-spanning segment. Topologically, residues 52 to 226 (WTHGDPRKVI…KIFEDYTKSW (175 aa)) are extracellular. N-linked (GlcNAc...) asparagine glycans are attached at residues Asn113 and Asn204. A helical membrane pass occupies residues 227-247 (YWILICLLIAVVLSLIFIVLL). The Cytoplasmic segment spans residues 248-249 (RF). The helical transmembrane segment at 250 to 270 (LAGVMVWVMILMVVAVIAYGI) threads the bilayer. The Extracellular segment spans residues 271–309 (AHCSIKYVSLKDTPGSNITLQQLGFQPDFAVYLHIRQTW). Residue Asn287 is glycosylated (N-linked (GlcNAc...) asparagine). Residues 310–330 (LAFIIILAILELIIILLLIFL) traverse the membrane as a helical segment. At 331 to 353 (RNRIRVAVELMKEASRAIGYVMS) the chain is on the cytoplasmic side. Residues 354–374 (SLVFPIFTFFLLAIVIAFWGV) traverse the membrane as a helical segment. Residues 375–435 (NAVFLSTSSE…YGGETPYHKY (61 aa)) are Extracellular-facing. 2 N-linked (GlcNAc...) asparagine glycosylation sites follow: Asn391 and Asn406. The helical transmembrane segment at 436–456 (LILLQFYNVFLFFWCANFVTA) threads the bilayer. The Cytoplasmic portion of the chain corresponds to 457–498 (LGQMTLAGAFASYYWAFDKSKDMPAFPLCASLGRSLRYHTGS). Residues 499–519 (LAFGSLLLAIVQVIRVLLEYI) traverse the membrane as a helical segment. At 520–593 (DHKLKGAENK…RVVVLDKVTD (74 aa)) the chain is on the extracellular side. A helical membrane pass occupies residues 594 to 614 (FILFLGKLLIVGLVGIFAFFF). The Cytoplasmic segment spans residues 615–632 (FSGQTDAFKGTAPSLHYY). Residues 633 to 653 (WVPILTVLVCSYLIAHGFFSV) form a helical membrane-spanning segment. The Extracellular portion of the chain corresponds to 654-697 (YAMCVDTLFLCFLEDLERNDGSAERPYLMSENLLNVLKKKNQAN).

Belongs to the CTL (choline transporter-like) family.

It is found in the cell membrane. The protein resides in the mitochondrion outer membrane. It catalyses the reaction choline(out) + n H(+)(in) = choline(in) + n H(+)(out). The catalysed reaction is ethanolamine(out) + n H(+)(in) = ethanolamine(in) + n H(+)(out). Choline/H+ antiporter, mainly in mitochodria. Also acts as a low-affinity ethanolamine/H+ antiporter, regulating the supply of extracellular ethanolamine (Etn) for the CDP-Etn pathway, redistribute intracellular Etn and balance the CDP-Cho and CDP-Etn arms of the Kennedy pathway. The sequence is that of Choline transporter-like protein 2 (slc44a2) from Danio rerio (Zebrafish).